The chain runs to 262 residues: Inner membrane protein YcfZ (262 aa).

Residues 1–4 (MKKF) are Cytoplasmic-facing. The helical transmembrane segment at 5 to 27 (IILLSLLILLPLTAASKPLIPIM) threads the bilayer. Residues 28–182 (KTLFTDVTGT…HENAPPGSTN (155 aa)) are Periplasmic-facing. A helical membrane pass occupies residues 183 to 202 (TLGFIAWAATFILFSRIFYY). Over 203–206 (TTRF) the chain is Cytoplasmic. A helical transmembrane segment spans residues 207-229 (IYALKFAVAMTIANMGYQALCLY). Residues 230-238 (IDNSFAITR) lie on the Periplasmic side of the membrane. Residues 239 to 258 (ISPLWAGLIGVCTFIAALLL) form a helical membrane-spanning segment. Topologically, residues 259-262 (TSKR) are cytoplasmic.

Its subcellular location is the cell inner membrane. This chain is Inner membrane protein YcfZ (ycfZ), found in Escherichia coli (strain K12).